We begin with the raw amino-acid sequence, 47 residues long: Large ribosomal subunit protein bL34 (47 aa).

Belongs to the bacterial ribosomal protein bL34 family.

This is Large ribosomal subunit protein bL34 (rpmH) from Mycobacterium leprae (strain TN).